Here is a 124-residue protein sequence, read N- to C-terminus: UPF0382 membrane protein HI_1073 (124 aa).

Helical transmembrane passes span 6 to 26 (LTLVALSGFFCVALGAFAAHG), 70 to 90 (SMSSWLIGILLFSGSLYALAF), and 95 to 115 (VIVWITPIGGTLFLIGWISLA).

The protein belongs to the UPF0382 family.

It is found in the cell membrane. The polypeptide is UPF0382 membrane protein HI_1073 (Haemophilus influenzae (strain ATCC 51907 / DSM 11121 / KW20 / Rd)).